We begin with the raw amino-acid sequence, 143 residues long: Hemoglobin subunit alpha-2 (143 aa).

An N-acetylserine modification is found at serine 2. Residues 2–143 (SLSAKDKATV…LALALSEKYR (142 aa)) form the Globin domain. O2 is bound at residue histidine 60. Histidine 89 contributes to the heme b binding site.

Belongs to the globin family. As to quaternary structure, hb 2 is a heterotetramer of two alpha-2 and two beta-1 chains. Hb 3 is a heterotetramer of two alpha-2 and two beta-2 chains. In terms of tissue distribution, red blood cells.

Functionally, involved in oxygen transport from gills to the various peripheral tissues. The sequence is that of Hemoglobin subunit alpha-2 (hba2) from Boreogadus saida (Polar cod).